Reading from the N-terminus, the 407-residue chain is MQKTSNTLALGSLTALFFLMGFITVLNDILIPHLKPIFDLTYFEASLIQFCFFGAYFIMGGVFGNVISKIGYPFGVVLGFVITATGCALFYPAAHFGSYGFFLGALFILASGIVCLQTAGNPFVTLLSKGKEARNLVLVQAFNSLGTTLGPIFGSLLIFSTTKMGDNASLIDKLADAKSVQMPYLGLAVFSLLLALIMYLLKLPDVEKEMPKETTQKSLFSHKHFVFGALGIFFYVGGEVAIGSFLVLSFEKLLNLDSQSSAHYLVYYWGGAMVGRFLGSVLMNKIAPNKYLAFNALSSIVLIALAIIIGGKIALFALTFVGFFNSIMFPTIFSLATLNLGHLTSKASGVISMAIVGGALIPPIQGAVTDMLTATESNLLYAYGVPLLCYFYILFFALKGYKQEENS.

Transmembrane regions (helical) follow at residues 11 to 31 (GSLT…DILI), 47 to 67 (LIQF…GNVI), 70 to 90 (IGYP…CALF), 96 to 116 (FGSY…IVCL), 139 to 159 (VQAF…LLIF), 180 to 200 (VQMP…IMYL), 225 to 245 (FVFG…IGSF), 263 to 283 (HYLV…SVLM), 300 to 320 (IVLI…ALTF), 321 to 341 (VGFF…LNLG), 349 to 369 (GVIS…GAVT), and 378 to 398 (NLLY…FFAL).

Belongs to the major facilitator superfamily. FHS transporter (TC 2.A.1.7) family.

The protein resides in the cell inner membrane. Intake of glucose and galactose. This Helicobacter pylori (strain ATCC 700392 / 26695) (Campylobacter pylori) protein is Putative glucose/galactose transporter (gluP).